The primary structure comprises 377 residues: 3-(aryl)acrylate reductase (377 aa).

FAD is bound by residues 121 to 130 (FALTEPGAGS), 154 to 156 (FIT), R266, Q277, and 334 to 338 (QIHGG). E361 acts as the Proton acceptor in catalysis. 363–365 (TSE) contacts FAD.

It belongs to the acyl-CoA dehydrogenase family. It depends on FAD as a cofactor.

The catalysed reaction is 3-phenylpropanoate + oxidized [electron-transfer flavoprotein] + H(+) = (E)-cinnamate + reduced [electron-transfer flavoprotein]. It carries out the reaction phloretate + oxidized [electron-transfer flavoprotein] + H(+) = (E)-4-coumarate + reduced [electron-transfer flavoprotein]. It catalyses the reaction indole-3-propanoate + oxidized [electron-transfer flavoprotein] + H(+) = (E)-3-(indol-3-yl)acrylate + reduced [electron-transfer flavoprotein]. It functions in the pathway amino-acid degradation. In terms of biological role, essential for the reductive metabolism of L-phenylalanine, L-tyrosine and L-tryptophan. Catalyzes the reduction of phenylacrylic acid to phenylpropionic acid, 4-hydroxy-phenylacrylic acid to 4-hydroxy-phenylpropionic acid, and indoleacrylic acid to indolepropionic acid. The protein is 3-(aryl)acrylate reductase of Clostridium sporogenes (strain ATCC 15579).